A 359-amino-acid polypeptide reads, in one-letter code: DNA integrity scanning protein DisA (359 aa).

Residues 10 to 148 form the DAC domain; sequence ELDLLDIVQF…GNRRYTLKDI (139 aa). Residues glycine 77, leucine 95, and 108 to 112 each bind ATP; that span reads MRHRT.

It belongs to the DisA family. As to quaternary structure, homooctamer. The cofactor is Mg(2+).

The catalysed reaction is 2 ATP = 3',3'-c-di-AMP + 2 diphosphate. Participates in a DNA-damage check-point that is active prior to asymmetric division when DNA is damaged. DisA forms globular foci that rapidly scan along the chromosomes during sporulation, searching for lesions. When a lesion is present, DisA pauses at the lesion site. This triggers a cellular response that culminates in a temporary block in sporulation initiation. Its function is as follows. Also has diadenylate cyclase activity, catalyzing the condensation of 2 ATP molecules into cyclic di-AMP (c-di-AMP). c-di-AMP acts as a signaling molecule that couples DNA integrity with progression of sporulation. The rise in c-di-AMP level generated by DisA while scanning the chromosome, operates as a positive signal that advances sporulation; upon encountering a lesion, the DisA focus arrests at the damaged site and halts c-di-AMP synthesis. The protein is DNA integrity scanning protein DisA of Bacillus pumilus (strain SAFR-032).